The sequence spans 499 residues: U4/U6 small nuclear ribonucleoprotein Prp31 (499 aa).

Residues 1-37 (MSLADELLADLEEAAEEEEGGSYGEEEEEPAIEDVQE) form a disordered region. The segment covering 7–37 (LLADLEEAAEEEEGGSYGEEEEEPAIEDVQE) has biased composition (acidic residues). 2 coiled-coil regions span residues 85–120 (EAAPEYRVIVDANNLTVEIENELNIIHKFIRDKYSK) and 181–215 (EEELERLEEACDMALELNASKHRIYEYVESRMSFI). The 119-residue stretch at 215–333 (IAPNLSIIIG…IERKFDKWQE (119 aa)) folds into the Nop domain. A disordered region spans residues 334–357 (PPPVKQVKPLPAPLDGQRKKRGGR). Residues 351 to 364 (RKKRGGRRYRKMKE) carry the Nuclear localization signal (NLS) motif. Serine 379, serine 395, and serine 432 each carry phosphoserine. Position 438 is an N6-acetyllysine (lysine 438). Serine 439 carries the post-translational modification Phosphoserine. Phosphothreonine is present on threonine 440. The residue at position 450 (serine 450) is a Phosphoserine. Threonine 455 carries the phosphothreonine modification. Glycyl lysine isopeptide (Lys-Gly) (interchain with G-Cter in SUMO2) cross-links involve residues lysine 471 and lysine 478.

This sequence belongs to the PRP31 family. In terms of assembly, identified in the spliceosome B complex. Component of the U4/U6-U5 tri-snRNP complex composed of the U4, U6 and U5 snRNAs and at least PRPF3, PRPF4, PRPF6, PRPF8, PRPF31, SNRNP200, TXNL4A, SNRNP40, DDX23, CD2BP2, PPIH, SNU13, EFTUD2, SART1 and USP39. Interacts with a complex formed by SNU13 and U4 snRNA, but not with SNU13 or U4 snRNA alone. The complex formed by SNU13 and PRPF31 also binds U4atac snRNA, a characteristic component of specific, less abundant spliceosomal complexes. Interacts with PRPF6/U5 snRNP-associated 102 kDa protein. Component of some MLL1/MLL complex, at least composed of the core components KMT2A/MLL1, ASH2L, HCFC1/HCF1, WDR5 and RBBP5, as well as the facultative components BACC1, CHD8, E2F6, HSP70, INO80C, KANSL1, LAS1L, MAX, MCRS1, MGA, KAT8/MOF, PELP1, PHF20, PRP31, RING2, RUVB1/TIP49A, RUVB2/TIP49B, SENP3, TAF1, TAF4, TAF6, TAF7, TAF9 and TEX10. Interacts (via its NLS) with CTNNBL1. Interacts with USH1G. In terms of processing, phosphorylated by PRP4K during spliceosome assembly. Ubiquitously expressed.

It is found in the nucleus. The protein resides in the nucleus speckle. Its subcellular location is the cajal body. In terms of biological role, involved in pre-mRNA splicing as component of the spliceosome. Required for the assembly of the U4/U5/U6 tri-snRNP complex, one of the building blocks of the spliceosome. The chain is U4/U6 small nuclear ribonucleoprotein Prp31 from Homo sapiens (Human).